A 426-amino-acid chain; its full sequence is Isocitrate dehydrogenase [NADP] (426 aa).

D-threo-isocitrate-binding residues include Ser-123, Asn-125, Arg-129, Arg-139, and Arg-162. Asp-312 serves as a coordination point for Mg(2+). NADP(+)-binding positions include 344-350, Asn-357, and Lys-404; that span reads HGTAWDI.

The protein belongs to the isocitrate and isopropylmalate dehydrogenases family. As to quaternary structure, homodimer. Mg(2+) is required as a cofactor. It depends on Mn(2+) as a cofactor.

It catalyses the reaction D-threo-isocitrate + NADP(+) = 2-oxoglutarate + CO2 + NADPH. In terms of biological role, catalyzes the oxidative decarboxylation of isocitrate to 2-oxoglutarate and carbon dioxide with the concomitant reduction of NADP(+). The protein is Isocitrate dehydrogenase [NADP] (icd) of Aquifex aeolicus (strain VF5).